We begin with the raw amino-acid sequence, 644 residues long: DNA mismatch repair protein MutL (644 aa).

The span at 340-360 shows a compositional bias: basic and acidic residues; sequence KKEKDESVQEQFKFEHTKPRE. Residues 340 to 425 are disordered; it reads KKEKDESVQE…ETVREEKEWT (86 aa). Residues 387–400 show a composition bias toward low complexity; that stretch reads QLWQPPKQEWQPPQ. The span at 416–425 shows a compositional bias: basic and acidic residues; it reads ETVREEKEWT.

This sequence belongs to the DNA mismatch repair MutL/HexB family.

In terms of biological role, this protein is involved in the repair of mismatches in DNA. It is required for dam-dependent methyl-directed DNA mismatch repair. May act as a 'molecular matchmaker', a protein that promotes the formation of a stable complex between two or more DNA-binding proteins in an ATP-dependent manner without itself being part of a final effector complex. The protein is DNA mismatch repair protein MutL of Bacillus mycoides (strain KBAB4) (Bacillus weihenstephanensis).